The chain runs to 321 residues: Histidine N-alpha-methyltransferase (321 aa).

Y56 contacts L-histidine. S-adenosyl-L-methionine-binding positions include G86, K92, D113, and 141–142 (DF). L-histidine contacts are provided by residues N166, Y206, and 282–284 (EVS).

It belongs to the methyltransferase superfamily. EgtD family. As to quaternary structure, monomer.

It catalyses the reaction L-histidine + 3 S-adenosyl-L-methionine = hercynine + 3 S-adenosyl-L-homocysteine + 3 H(+). The protein operates within amino-acid biosynthesis; ergothioneine biosynthesis. Functionally, catalyzes the SAM-dependent triple methylation of the alpha-amino group of histidine to form hercynine, a step in the biosynthesis pathway of ergothioneine. Among all the proteinogenic amino acids, only L-histidine is a substrate. The chain is Histidine N-alpha-methyltransferase from Mycolicibacterium smegmatis (strain ATCC 700084 / mc(2)155) (Mycobacterium smegmatis).